Consider the following 123-residue polypeptide: Large ribosomal subunit protein bL12 (123 aa).

Belongs to the bacterial ribosomal protein bL12 family. As to quaternary structure, homodimer. Part of the ribosomal stalk of the 50S ribosomal subunit. Forms a multimeric L10(L12)X complex, where L10 forms an elongated spine to which 2 to 4 L12 dimers bind in a sequential fashion. Binds GTP-bound translation factors.

In terms of biological role, forms part of the ribosomal stalk which helps the ribosome interact with GTP-bound translation factors. Is thus essential for accurate translation. This chain is Large ribosomal subunit protein bL12, found in Shewanella sp. (strain ANA-3).